Consider the following 488-residue polypeptide: HSPB1-associated protein 1 (488 aa).

The segment at 88 to 208 (ETTCNYVEAT…EDTPFLYPTR (121 aa)) is interaction with HSPB1. Residues 124-288 (WAYADYKYFV…HLARVEEAIT (165 aa)) enclose the JmjC domain. Residues 369-379 (QTGSQNLTTGT) show a composition bias toward polar residues. Residues 369-415 (QTGSQNLTTGTDKPEAASPFGPDLVPVAQRSEEPPSERGGIFGSDGK) are disordered.

As to quaternary structure, interacts with CRYAB and HSPB1. Widely expressed.

The protein localises to the cytoplasm. May play a role in cellular stress response. This Homo sapiens (Human) protein is HSPB1-associated protein 1 (HSPBAP1).